The primary structure comprises 448 residues: Hydroxycinnamoyl-CoA:piscidic acid hydroxycinnamoyltransferase (448 aa).

Residues histidine 153 and aspartate 395 each act as proton acceptor in the active site.

The protein belongs to the plant acyltransferase family. As to expression, highly expressed in root and rhizome. Expressed in senescent leaf and callus tissues. Expressed in detached leaf treated for 18 hours with ethephon, methyl jasmonate, salicylic acid or illuminated for 24 hours with UV light. Not expressed in mature leaf. Expressed at low levels in leaves and flowers.

It carries out the reaction (2R,3S)-piscidate + (E)-4-coumaroyl-CoA = cimicifugate K + CoA. The enzyme catalyses (2R,3S)-piscidate + (E)-caffeoyl-CoA = cimicifugate D + CoA. It catalyses the reaction (2R,3S)-piscidate + (E)-sinapoyl-CoA = cimicifugate J + CoA. The catalysed reaction is (2R,3S)-piscidate + (E)-feruloyl-CoA = cimicifugate E + CoA. It participates in phenylpropanoid metabolism. Functionally, catalyzes the formation of cimicifugic acids. Uses hydroxycinnamoyl-CoA thioesters as hydroxycinnamoyl donor substrates. Has a strict specificity for piscidic acid as an acceptor substrate as none of the various other acceptors tested including 4-hydroxyphenyllactic acid, malate, spermidine or tetrahydroxyhexanedioic acid are substrates. Donor substrates include 4-coumaroyl-CoA, caffeoyl-CoA, sinapoyl-CoA and feruloyl-CoA. No activity with cinnamoyl-CoA, isoferuloyl-CoA, 3,4-dimethoxycinnamoyl-CoA or 3,4-dihydroxybenzoyl-CoA as donors. In the reverse reaction with fukinolic acid and CoA as substrates, a formation of fukiic acid is evident. Hence, fukiic acid may also serve as an acceptor substrate. Involved in the biosynthesis of cimicifugic and possibly fukinolic acids. The sequence is that of Hydroxycinnamoyl-CoA:piscidic acid hydroxycinnamoyltransferase from Actaea racemosa (Black cohosh).